Consider the following 291-residue polypeptide: B3 domain-containing protein At2g16210 (291 aa).

The segment at residues 19–114 is a DNA-binding region (TF-B3 1); sequence FFKVVQSINV…HFTVNIFKLD (96 aa). A compositionally biased stretch (polar residues) spans 149-159; it reads VSSNRGQTTAA. Residues 149–182 form a disordered region; it reads VSSNRGQTTAAESKGRKLNLGKRAAKESQSSKRT. Residues 172 to 182 show a composition bias toward basic and acidic residues; the sequence is AAKESQSSKRT. A DNA-binding region (TF-B3 2) is located at residues 200–291; sequence AAAFTILFKQ…KELLLVVSKP (92 aa).

The protein localises to the nucleus. In Arabidopsis thaliana (Mouse-ear cress), this protein is B3 domain-containing protein At2g16210.